Here is a 1049-residue protein sequence, read N- to C-terminus: Protein phosphatase Slingshot homolog 1 (1049 aa).

The segment covering 1-12 (MALVTLQRSPTP) has biased composition (polar residues). Residues 1 to 28 (MALVTLQRSPTPSAASSSASNSELEAGS) are disordered. Residue A2 is modified to N-acetylalanine. The segment covering 13 to 25 (SAASSSASNSELE) has biased composition (low complexity). A phosphoserine mark is found at S37 and S57. One can recognise a DEK-C domain in the interval 249–304 (ERTERLIKAKLRSIMMSQDLENVTSKEIRNELEKQMNCNLKELKEFIDNEMLLILG). One can recognise a Tyrosine-protein phosphatase domain in the interval 308–449 (KPSLIFDHLY…LSEYEGILDA (142 aa)). C393 acts as the Phosphocysteine intermediate in catalysis. A disordered region spans residues 456–499 (KLWRQQTDSSLQQPVDDPAGPGDFLPETPDGTPESQLPFLDDAA). Positions 458–468 (WRQQTDSSLQQ) are enriched in polar residues. S515 carries the phosphoserine modification. Disordered stretches follow at residues 544–603 (AAPP…RWGQ), 693–787 (HLAS…KPAK), 825–899 (HTKE…KSPP), and 923–955 (PTSSSMSSNLTRSSSSDSIHSVRGKPGLVKQRT). Over residues 564 to 573 (CEKDVKKKLE) the composition is skewed to basic and acidic residues. S576 carries the post-translational modification Phosphoserine. Residues 731–742 (GAALEPPASLLE) show a composition bias toward low complexity. Positions 772–787 (VIKEESSPKKDMKPAK) are enriched in basic and acidic residues. A Phosphoserine modification is found at S897. The segment at 897 to 1049 (SPPPFFYRLD…LKSPSWMSKS (153 aa)) is interaction with YWHAG. The segment covering 925-943 (SSSMSSNLTRSSSSDSIHS) has biased composition (low complexity). S978 carries the phosphoserine modification. The tract at residues 989–1049 (TEDLSSEADP…LKSPSWMSKS (61 aa)) is disordered. Residues 1001–1013 (VADSQDTTLSESS) are compositionally biased toward polar residues.

Belongs to the protein-tyrosine phosphatase family. Interacts with actin and this stimulates phosphatase activity. Also interacts with LIMK1 and with the 14-3-3 proteins YWHAB, YWHAG, YWHAQ, and YWHAZ. Interaction with 14-3-3 proteins inhibits phosphatase activity and also blocks recruitment to lamellipodia and stimulation by actin. In terms of processing, phosphorylated. Inhibitory phosphorylation by PAK4 promotes binding to YWHAZ. Phosphorylation at Ser-978 is decreased by stimuli which promote actin reorganization and lamellipodia formation. Can be dephosphorylated and activated by PPP3CA/calcineurin A. Phosphorylation decreases immediately prior to telophase.

The protein localises to the cytoplasm. The protein resides in the cytoskeleton. Its subcellular location is the cell projection. It localises to the lamellipodium. It is found in the cleavage furrow. The protein localises to the midbody. It catalyses the reaction O-phospho-L-tyrosyl-[protein] + H2O = L-tyrosyl-[protein] + phosphate. The enzyme catalyses O-phospho-L-seryl-[protein] + H2O = L-seryl-[protein] + phosphate. The catalysed reaction is O-phospho-L-threonyl-[protein] + H2O = L-threonyl-[protein] + phosphate. Functionally, protein phosphatase which regulates actin filament dynamics. Dephosphorylates and activates the actin binding/depolymerizing factor cofilin, which subsequently binds to actin filaments and stimulates their disassembly. Inhibitory phosphorylation of cofilin is mediated by LIMK1, which may also be dephosphorylated and inactivated by this protein. In Homo sapiens (Human), this protein is Protein phosphatase Slingshot homolog 1.